The primary structure comprises 1489 residues: FERM domain-containing protein C (1489 aa).

Composition is skewed to polar residues over residues 59–79 (DTES…NFNS) and 103–118 (NSPL…STSI). Disordered regions lie at residues 59–86 (DTES…HQHL), 103–197 (NSPL…PSTL), 252–271 (NSVQ…NNNN), and 277–312 (EQQQ…TPDS). Residues 131-153 (SSSSSSSDGDSNSSSDSSDNSSE) are compositionally biased toward low complexity. The segment covering 163 to 172 (HLHLHRHHRK) has biased composition (basic residues). The segment covering 181–195 (FESSSESSEQYGSPS) has biased composition (low complexity). Residues 202–289 (ALKLEKIMQI…QEKQQQQQQH (88 aa)) are a coiled coil. The span at 277 to 287 (EQQQEKQQQQQ) shows a compositional bias: low complexity. The segment covering 303–312 (RSVSISTPDS) has biased composition (polar residues). Positions 356–383 (IKVSKVLEEEMQLQQEFEKQEQLRHSAR) form a coiled coil. Disordered stretches follow at residues 396 to 435 (NLQD…ENQN), 459 to 479 (VITP…KILT), and 508 to 569 (EDPL…TTTT). The segment covering 421–435 (ENVSNDNSSDNENQN) has biased composition (low complexity). A compositionally biased stretch (polar residues) spans 545–555 (TASSSSSPTLQ). The span at 556–569 (ATKTTTTTTTTTTT) shows a compositional bias: low complexity. Positions 637–934 (ILVHISLVDQ…GYKYFIQHDE (298 aa)) constitute an FERM domain. LRR repeat units lie at residues 1017 to 1040 (KVEL…LKDT), 1053 to 1075 (ENLN…AFEP), 1087 to 1110 (HLNL…IEKY), 1111 to 1133 (PNIE…VILR), 1167 to 1191 (NKTI…IFEG), 1196 to 1219 (SLSL…KFIK), 1254 to 1278 (SCHI…VIKG), 1282 to 1306 (NQTI…LCQS), 1339 to 1362 (NKTI…AIGT), 1367 to 1391 (NETL…ILNG), 1395 to 1418 (NSTI…SLAN), 1428 to 1450 (VITL…QLST), and 1451 to 1474 (NIPI…IKNA).

In Dictyostelium discoideum (Social amoeba), this protein is FERM domain-containing protein C (frmC).